Reading from the N-terminus, the 294-residue chain is Large ribosomal subunit protein uL18B (294 aa).

Belongs to the universal ribosomal protein uL18 family. As to quaternary structure, component of the large ribosomal subunit (LSU). Mature yeast ribosomes consist of a small (40S) and a large (60S) subunit. The 40S small subunit contains 1 molecule of ribosomal RNA (18S rRNA) and 33 different proteins (encoded by 57 genes). The large 60S subunit contains 3 rRNA molecules (25S, 5.8S and 5S rRNA) and 46 different proteins (encoded by 81 genes). Component of a hexameric 5S RNP precursor complex, composed of 5S RNA, rrs1, rpf2, rpl5a/rpl5b, rpl11a/rpl11b and syo1; this complex acts as a precursor for ribosome assembly. rpl5a/rpl5b/uL18 forms a heterotrimeric complex with syo1 and rpl11a/rpl11b/uL5. Interaction of this complex with KAP104 allows the nuclear import of the heterotrimer.

Its subcellular location is the cytoplasm. It is found in the nucleus. Its function is as follows. Component of the ribosome, a large ribonucleoprotein complex responsible for the synthesis of proteins in the cell. The small ribosomal subunit (SSU) binds messenger RNAs (mRNAs) and translates the encoded message by selecting cognate aminoacyl-transfer RNA (tRNA) molecules. The large subunit (LSU) contains the ribosomal catalytic site termed the peptidyl transferase center (PTC), which catalyzes the formation of peptide bonds, thereby polymerizing the amino acids delivered by tRNAs into a polypeptide chain. The nascent polypeptides leave the ribosome through a tunnel in the LSU and interact with protein factors that function in enzymatic processing, targeting, and the membrane insertion of nascent chains at the exit of the ribosomal tunnel. This is Large ribosomal subunit protein uL18B (rpl502) from Schizosaccharomyces pombe (strain 972 / ATCC 24843) (Fission yeast).